The chain runs to 209 residues: Kynurenine formamidase (209 aa).

Position 20 (Trp20) interacts with substrate. Zn(2+)-binding residues include His50, His54, and Asp56. The active-site Proton donor/acceptor is the His60. Residues His161 and Glu173 each contribute to the Zn(2+) site.

This sequence belongs to the Cyclase 1 superfamily. KynB family. In terms of assembly, homodimer. Zn(2+) is required as a cofactor.

The enzyme catalyses N-formyl-L-kynurenine + H2O = L-kynurenine + formate + H(+). It participates in amino-acid degradation; L-tryptophan degradation via kynurenine pathway; L-kynurenine from L-tryptophan: step 2/2. Functionally, catalyzes the hydrolysis of N-formyl-L-kynurenine to L-kynurenine, the second step in the kynurenine pathway of tryptophan degradation. The polypeptide is Kynurenine formamidase (Bacillus cereus (strain ATCC 14579 / DSM 31 / CCUG 7414 / JCM 2152 / NBRC 15305 / NCIMB 9373 / NCTC 2599 / NRRL B-3711)).